The following is a 430-amino-acid chain: Enolase (430 aa).

Residue glutamine 163 coordinates (2R)-2-phosphoglycerate. Catalysis depends on glutamate 205, which acts as the Proton donor. The Mg(2+) site is built by aspartate 242, glutamate 287, and aspartate 314. (2R)-2-phosphoglycerate contacts are provided by lysine 339, arginine 368, serine 369, and lysine 390. The active-site Proton acceptor is the lysine 339.

This sequence belongs to the enolase family. Mg(2+) serves as cofactor.

The protein resides in the cytoplasm. The protein localises to the secreted. It localises to the cell surface. It catalyses the reaction (2R)-2-phosphoglycerate = phosphoenolpyruvate + H2O. It functions in the pathway carbohydrate degradation; glycolysis; pyruvate from D-glyceraldehyde 3-phosphate: step 4/5. Its function is as follows. Catalyzes the reversible conversion of 2-phosphoglycerate (2-PG) into phosphoenolpyruvate (PEP). It is essential for the degradation of carbohydrates via glycolysis. This is Enolase from Bacillus cytotoxicus (strain DSM 22905 / CIP 110041 / 391-98 / NVH 391-98).